The chain runs to 318 residues: Trans-prenyltransferase (318 aa).

A helical transmembrane segment spans residues 1-21 (MLHLIYISIIVVLIIILISYT). Isopentenyl diphosphate contacts are provided by Lys-85, Arg-88, and His-122. Mg(2+) is bound by residues Asp-129 and Asp-135. Arg-140 lines the dimethylallyl diphosphate pocket. Arg-141 lines the isopentenyl diphosphate pocket. 3 residues coordinate dimethylallyl diphosphate: Lys-216, Thr-217, and Gln-254.

It belongs to the FPP/GGPP synthase family. Asfivirus trans-prenyltransferase subfamily. Requires Mg(2+) as cofactor.

It localises to the host endoplasmic reticulum. Its subcellular location is the host membrane. The enzyme catalyses isopentenyl diphosphate + dimethylallyl diphosphate = (2E)-geranyl diphosphate + diphosphate. The catalysed reaction is isopentenyl diphosphate + (2E)-geranyl diphosphate = (2E,6E)-farnesyl diphosphate + diphosphate. It catalyses the reaction isopentenyl diphosphate + (2E,6E)-farnesyl diphosphate = (2E,6E,10E)-geranylgeranyl diphosphate + diphosphate. It carries out the reaction isopentenyl diphosphate + (2E,6E,10E)-geranylgeranyl diphosphate = (2E,6E,10E,14E)-geranylfarnesyl diphosphate + diphosphate. Its pathway is isoprenoid biosynthesis; farnesyl diphosphate biosynthesis; farnesyl diphosphate from geranyl diphosphate and isopentenyl diphosphate: step 1/1. The protein operates within isoprenoid biosynthesis; geranyl diphosphate biosynthesis; geranyl diphosphate from dimethylallyl diphosphate and isopentenyl diphosphate: step 1/1. It participates in isoprenoid biosynthesis; geranylgeranyl diphosphate biosynthesis; geranylgeranyl diphosphate from farnesyl diphosphate and isopentenyl diphosphate: step 1/1. Functionally, trans-prenyltransferase that catalyzes the sequential condensation of isopentenyl diphosphate (IPP) with different allylic diphosphates, such as dimethylallyl diphosphate (DMAPP), geranyl diphosphate (GPP), farnesyl diphosphate (FPP) and geranylgeranyl diphosphate (GGPP), farnesyl diphosphate being the best allylic substrate. The protein is Trans-prenyltransferase of Ornithodoros (relapsing fever ticks).